The chain runs to 478 residues: Aspartyl/glutamyl-tRNA(Asn/Gln) amidotransferase subunit B (478 aa).

It belongs to the GatB/GatE family. GatB subfamily. In terms of assembly, heterotrimer of A, B and C subunits.

The enzyme catalyses L-glutamyl-tRNA(Gln) + L-glutamine + ATP + H2O = L-glutaminyl-tRNA(Gln) + L-glutamate + ADP + phosphate + H(+). The catalysed reaction is L-aspartyl-tRNA(Asn) + L-glutamine + ATP + H2O = L-asparaginyl-tRNA(Asn) + L-glutamate + ADP + phosphate + 2 H(+). In terms of biological role, allows the formation of correctly charged Asn-tRNA(Asn) or Gln-tRNA(Gln) through the transamidation of misacylated Asp-tRNA(Asn) or Glu-tRNA(Gln) in organisms which lack either or both of asparaginyl-tRNA or glutaminyl-tRNA synthetases. The reaction takes place in the presence of glutamine and ATP through an activated phospho-Asp-tRNA(Asn) or phospho-Glu-tRNA(Gln). In Syntrophotalea carbinolica (strain DSM 2380 / NBRC 103641 / GraBd1) (Pelobacter carbinolicus), this protein is Aspartyl/glutamyl-tRNA(Asn/Gln) amidotransferase subunit B.